The sequence spans 258 residues: Peptidase inhibitor 15 (258 aa).

An N-terminal signal peptide occupies residues 1–21 (MTIIAAISCVFLFSILCETSA). The propeptide occupies 22-60 (LVLPNSTDLLLSNNNFTDIETALAAHLDSAKIPKARRKR). N-linked (GlcNAc...) asparagine glycosylation is found at N26, N36, and N124. The SCP domain occupies 71 to 211 (LDYHNQVRGK…RRAVYLVCNY (141 aa)).

Belongs to the CRISP family.

Its subcellular location is the secreted. Functionally, serine protease inhibitor which displays weak inhibitory activity against trypsin. May play a role in facial patterning during embryonic development. This chain is Peptidase inhibitor 15 (PI15), found in Gallus gallus (Chicken).